We begin with the raw amino-acid sequence, 344 residues long: Arginine N-succinyltransferase (344 aa).

A succinyl-CoA-binding site is contributed by Leu-125. Catalysis depends on His-229, which acts as the Proton donor.

Belongs to the arginine N-succinyltransferase family.

It carries out the reaction succinyl-CoA + L-arginine = N(2)-succinyl-L-arginine + CoA + H(+). It participates in amino-acid degradation; L-arginine degradation via AST pathway; L-glutamate and succinate from L-arginine: step 1/5. In terms of biological role, catalyzes the transfer of succinyl-CoA to arginine to produce N(2)-succinylarginine. This Escherichia coli O17:K52:H18 (strain UMN026 / ExPEC) protein is Arginine N-succinyltransferase.